The chain runs to 423 residues: UPF0229 protein VP0986 (423 aa).

The tract at residues 69–112 (GGVRERVHPGNDQFITGDKIERPKGGGQGSGSGEGNASPDGEGQ) is disordered. The span at 93–102 (GGGQGSGSGE) shows a compositional bias: gly residues.

Belongs to the UPF0229 family.

The polypeptide is UPF0229 protein VP0986 (Vibrio parahaemolyticus serotype O3:K6 (strain RIMD 2210633)).